The sequence spans 205 residues: MISTDPWAGAVQDIIAAGRRMDRFGWVPATAGNISRRLPDGRIAITRSGGHKGHLTADGVIEVTADGRAVRAGDRPSAETLLHCHVYEASPDVGAVLHGHSVASTVLSMMEQGDAILLSGYEVLKVFEGQQTHDTTVRLPVFDNDQDIARLSGVVAPYLGRMPAGYVIRGHGVYVWGGTMDVALARLEGLEFLLACELERRKVAR.

2 residues coordinate Zn(2+): H98 and H100.

It belongs to the aldolase class II family. MtnB subfamily. It depends on Zn(2+) as a cofactor.

The enzyme catalyses 5-(methylsulfanyl)-D-ribulose 1-phosphate = 5-methylsulfanyl-2,3-dioxopentyl phosphate + H2O. It participates in amino-acid biosynthesis; L-methionine biosynthesis via salvage pathway; L-methionine from S-methyl-5-thio-alpha-D-ribose 1-phosphate: step 2/6. Catalyzes the dehydration of methylthioribulose-1-phosphate (MTRu-1-P) into 2,3-diketo-5-methylthiopentyl-1-phosphate (DK-MTP-1-P). This chain is Methylthioribulose-1-phosphate dehydratase, found in Gluconacetobacter diazotrophicus (strain ATCC 49037 / DSM 5601 / CCUG 37298 / CIP 103539 / LMG 7603 / PAl5).